Here is a 356-residue protein sequence, read N- to C-terminus: Tyrosine recombinase XerS (356 aa).

Residues 16–121 (LMPWFVLEYY…ALSSLYKYLT (106 aa)) enclose the Core-binding (CB) domain. The region spanning 169-354 (KFLDYVENEY…VNDEQKNALD (186 aa)) is the Tyr recombinase domain. Residues Arg-210, Lys-234, His-306, Arg-309, and His-332 contribute to the active site. Tyr-341 acts as the O-(3'-phospho-DNA)-tyrosine intermediate in catalysis.

This sequence belongs to the 'phage' integrase family. XerS subfamily.

The protein localises to the cytoplasm. Its activity is regulated as follows. FtsK is required for recombination. Functionally, site-specific tyrosine recombinase, which acts by catalyzing the cutting and rejoining of the recombining DNA molecules. Essential to convert dimers of the bacterial chromosome into monomers to permit their segregation at cell division. This chain is Tyrosine recombinase XerS, found in Streptococcus thermophilus (strain ATCC BAA-491 / LMD-9).